Reading from the N-terminus, the 276-residue chain is Energy-coupling factor transporter ATP-binding protein EcfA2 (276 aa).

An ABC transporter domain is found at 1-233; it reads MKTPFERLAL…GEEMAGWGLD (233 aa). 27 to 34 serves as a coordination point for ATP; it reads GHTGSGKS. Glutamate 158 serves as the catalytic Proton acceptor.

The protein belongs to the ABC transporter superfamily. Energy-coupling factor EcfA family. As to quaternary structure, forms a stable energy-coupling factor (ECF) transporter complex composed of 2 membrane-embedded substrate-binding proteins (S component), 2 ATP-binding proteins (A component) and 2 transmembrane proteins (T component).

Its subcellular location is the cell membrane. In terms of biological role, ATP-binding (A) component of a common energy-coupling factor (ECF) ABC-transporter complex. Unlike classic ABC transporters this ECF transporter provides the energy necessary to transport a number of different substrates. This is Energy-coupling factor transporter ATP-binding protein EcfA2 from Bacillus subtilis (strain 168).